A 126-amino-acid polypeptide reads, in one-letter code: Holo-[acyl-carrier-protein] synthase (126 aa).

Residues Asp8 and Glu59 each coordinate Mg(2+).

It belongs to the P-Pant transferase superfamily. AcpS family. The cofactor is Mg(2+).

The protein resides in the cytoplasm. It catalyses the reaction apo-[ACP] + CoA = holo-[ACP] + adenosine 3',5'-bisphosphate + H(+). Transfers the 4'-phosphopantetheine moiety from coenzyme A to a Ser of acyl-carrier-protein. The polypeptide is Holo-[acyl-carrier-protein] synthase (Rickettsia prowazekii (strain Madrid E)).